Reading from the N-terminus, the 156-residue chain is Ribosomal RNA large subunit methyltransferase H (156 aa).

S-adenosyl-L-methionine is bound by residues leucine 73, glycine 104, and 123–128 (LSDLTL).

The protein belongs to the RNA methyltransferase RlmH family. As to quaternary structure, homodimer.

The protein resides in the cytoplasm. The catalysed reaction is pseudouridine(1915) in 23S rRNA + S-adenosyl-L-methionine = N(3)-methylpseudouridine(1915) in 23S rRNA + S-adenosyl-L-homocysteine + H(+). Functionally, specifically methylates the pseudouridine at position 1915 (m3Psi1915) in 23S rRNA. The polypeptide is Ribosomal RNA large subunit methyltransferase H (Methylibium petroleiphilum (strain ATCC BAA-1232 / LMG 22953 / PM1)).